The primary structure comprises 590 residues: MIVLSNGVRIFINSNMNKDIYLGIASFGFENDIGEILGIAHLLEHILISFDSSKFVANASTARKYMSFWCCSIKGKSNYIDSINTLISWFFNNNKLRDNFCLNDIKNHIKELENEYYFRNEVFHCMDVLTFLENGDLYNGGRIDMLNNLESVNNMLYNRMHKIIGPNIVIFVKELNKNCLMLIQNSFGTLPSCPMSFSFPNFSNIDGKIIMMPSPFYTVMIKVSLSISNVISIMCLFETYHLIDYETVGNDLYVTLSFVKESDYENFINGVSTLKFNNVPNYTVLSLCDDFLMNAYLCFPWLSNDINNYLSTVRYSQNMFKNLEEDIQNSILLKKYIVVYPHFSKTVFNKNDSQMHKIVILDCLNEIKEDQLPKLNVNLMKKQTKNEIFIKYNDSSLIKYIIFAIGYKNNILRGNEGVSIHHQFSSEDIKSILESDTFLKYSKSKPAAMYQYLLLSFFVSGYSIEDILLNRESTIKLLKQYNNKILFGKKSRYDITTKSNFVCGIIKNKNINNNVITNTMWELKKKGLIYSMEHTKIDKRIFYIFMFTIYPDEVFLYLSKKFLSHCLIVSKTGNIEDFSSMKKDVIIKLC.

Histidine 41 contacts Zn(2+). Glutamate 44 is a catalytic residue. Histidine 45 lines the Zn(2+) pocket.

It belongs to the peptidase M44 family. The cofactor is Zn(2+).

Functionally, seems to be involved in viral proteins maturation by cleavage at Ala-Gly-|-Xaa motifs. The sequence is that of Probable metalloendopeptidase G1-type from Homo sapiens (Human).